The chain runs to 1066 residues: Vinculin (1066 aa).

The segment at 1 to 835 (MPVFHTRTIE…GAVAKVREAF (835 aa)) is N-terminal globular head. The residue at position 97 (Ser-97) is a Phosphoserine. The segment at 168–208 (MTKMAKMIDERQQELTHQEHRVMLVNSMNTVKELLPVLISA) is talin-interaction. Lys-173 is subject to N6-acetyllysine. 3 tandem repeats follow at residues 259-369 (ASKD…KVEN), 370-479 (AARK…KTNR), and 480-589 (AVAN…QMQE). The interval 259-589 (ASKDTEAMKR…LKDLKAQMQE (331 aa)) is 3 X 112 AA tandem repeats. Ser-260, Ser-272, Ser-275, Ser-290, Ser-346, and Ser-434 each carry phosphoserine. Lys-496 bears the N6-acetyllysine mark. A Phosphotyrosine modification is found at Tyr-537. 3 positions are modified to phosphoserine: Ser-574, Ser-579, and Ser-600. 2 positions are modified to phosphothreonine: Thr-604 and Thr-672. Ser-721 carries the phosphoserine modification. An interaction with ACTN4 region spans residues 741–764 (MANIQPQMLVAGATSIARRANRIL). Ser-795 and Ser-809 each carry phosphoserine. Tyr-822 carries the phosphotyrosine modification. The tract at residues 836–878 (QPQEPDFPPPPPDLEQLRLTDELAPPKPPLPEGEVPPPRPPPP) is linker (Pro-rich). A disordered region spans residues 857 to 887 (ELAPPKPPLPEGEVPPPRPPPPEEKDEEFPE). A compositionally biased stretch (pro residues) spans 860 to 876 (PPKPPLPEGEVPPPRPP). Residues 879–1066 (EEKDEEFPEQ…RWVRKTPWYQ (188 aa)) are C-terminal tail. Facilitates phospholipid membrane insertion stretches follow at residues 935–978 (RLVR…KRIR) and 1052–1066 (AGFT…PWYQ). Tyr-1065 is subject to Phosphotyrosine; by SRC-type Tyr-kinases.

This sequence belongs to the vinculin/alpha-catenin family. Exhibits self-association properties. Part of a complex composed of THSD1, PTK2/FAK1, TLN1 and VCL. Interacts with APBB1IP, NRAP and TLN1. Interacts with SYNM. Interacts with CTNNB1 and this interaction is necessary for its localization to the cell-cell junctions and for its function in regulating cell surface expression of E-cadherin. Interacts with SORBS1. Interacts with SYNM. Interacts with CTNNA1. Binds to ACTN4; this interaction triggers conformational changes. Interacts with FLII. In terms of processing, phosphorylated; on serines, threonines and tyrosines. Phosphorylation on Tyr-1065 in activated platelets affects head-tail interactions and cell spreading but has no effect on actin binding nor on localization to focal adhesion plaques. Post-translationally, acetylated; mainly by myristic acid but also by a small amount of palmitic acid.

The protein localises to the cell membrane. It is found in the cell junction. It localises to the adherens junction. Its subcellular location is the focal adhesion. The protein resides in the cytoplasm. The protein localises to the cytoskeleton. It is found in the sarcolemma. It localises to the cell projection. Its subcellular location is the podosome. Its function is as follows. Actin filament (F-actin)-binding protein involved in cell-matrix adhesion and cell-cell adhesion. Regulates cell-surface E-cadherin expression and potentiates mechanosensing by the E-cadherin complex. May also play important roles in cell morphology and locomotion. In Mus musculus (Mouse), this protein is Vinculin (Vcl).